The chain runs to 422 residues: Tyrosine--tRNA ligase 1 (422 aa).

Tyr-36 lines the L-tyrosine pocket. The 'HIGH' region signature appears at 41–50 (PTAGSLHIGH). L-tyrosine is bound by residues Tyr-173 and Gln-177. The 'KMSKS' region motif lies at 233-237 (KFGKT). Residue Lys-236 coordinates ATP. The region spanning 355–419 (SDVVTLLLET…GKKQFAMVKL (65 aa)) is the S4 RNA-binding domain.

Belongs to the class-I aminoacyl-tRNA synthetase family. TyrS type 1 subfamily. Homodimer.

The protein localises to the cytoplasm. It carries out the reaction tRNA(Tyr) + L-tyrosine + ATP = L-tyrosyl-tRNA(Tyr) + AMP + diphosphate + H(+). In terms of biological role, catalyzes the attachment of tyrosine to tRNA(Tyr) in a two-step reaction: tyrosine is first activated by ATP to form Tyr-AMP and then transferred to the acceptor end of tRNA(Tyr). The chain is Tyrosine--tRNA ligase 1 from Vibrio vulnificus (strain YJ016).